A 332-amino-acid chain; its full sequence is Transaldolase (332 aa).

Catalysis depends on Lys-135, which acts as the Schiff-base intermediate with substrate.

This sequence belongs to the transaldolase family. Type 1 subfamily. Homodimer.

The protein resides in the cytoplasm. The enzyme catalyses D-sedoheptulose 7-phosphate + D-glyceraldehyde 3-phosphate = D-erythrose 4-phosphate + beta-D-fructose 6-phosphate. The protein operates within carbohydrate degradation; pentose phosphate pathway; D-glyceraldehyde 3-phosphate and beta-D-fructose 6-phosphate from D-ribose 5-phosphate and D-xylulose 5-phosphate (non-oxidative stage): step 2/3. Its function is as follows. Transaldolase is important for the balance of metabolites in the pentose-phosphate pathway. The polypeptide is Transaldolase (Prochlorococcus marinus (strain NATL1A)).